We begin with the raw amino-acid sequence, 253 residues long: Demethylmenaquinone methyltransferase (253 aa).

S-adenosyl-L-methionine contacts are provided by residues Thr75, Asp96, and 124–125 (DA).

Belongs to the class I-like SAM-binding methyltransferase superfamily. MenG/UbiE family.

The catalysed reaction is a 2-demethylmenaquinol + S-adenosyl-L-methionine = a menaquinol + S-adenosyl-L-homocysteine + H(+). It functions in the pathway quinol/quinone metabolism; menaquinone biosynthesis; menaquinol from 1,4-dihydroxy-2-naphthoate: step 2/2. Its function is as follows. Methyltransferase required for the conversion of demethylmenaquinol (DMKH2) to menaquinol (MKH2). The polypeptide is Demethylmenaquinone methyltransferase (Desulfitobacterium hafniense (strain Y51)).